Reading from the N-terminus, the 403-residue chain is Large ribosomal subunit protein uL3 (403 aa).

The tract at residues 1-37 (MSHRKFSAPRHGSLGFLPRKRSSRHRGKVKSFPKDDP) is disordered. Serine 13 bears the Phosphoserine mark. The segment covering 18-31 (PRKRSSRHRGKVKS) has biased composition (basic residues). Residue lysine 39 forms a Glycyl lysine isopeptide (Lys-Gly) (interchain with G-Cter in SUMO2) linkage. The residue at position 136 (lysine 136) is an N6-acetyllysine. Glycyl lysine isopeptide (Lys-Gly) (interchain with G-Cter in SUMO2) cross-links involve residues lysine 224 and lysine 226. A Tele-methylhistidine modification is found at histidine 245. An N6-acetyllysine; alternate mark is found at lysine 286 and lysine 294. A Glycyl lysine isopeptide (Lys-Gly) (interchain with G-Cter in SUMO2); alternate cross-link involves residue lysine 286. Lysine 294 participates in a covalent cross-link: Glycyl lysine isopeptide (Lys-Gly) (interchain with G-Cter in SUMO1); alternate. Serine 304 is modified (phosphoserine). The residue at position 366 (lysine 366) is an N6-acetyllysine; alternate. A Glycyl lysine isopeptide (Lys-Gly) (interchain with G-Cter in SUMO2); alternate cross-link involves residue lysine 366. Lysine 373 is modified (N6-acetyllysine). Glycyl lysine isopeptide (Lys-Gly) (interchain with G-Cter in SUMO2) cross-links involve residues lysine 386, lysine 393, and lysine 399.

It belongs to the universal ribosomal protein uL3 family. Component of the large ribosomal subunit. Interacts with DHX33. Post-translationally, constitutively monomethylated at His-245 by METTL18. Methylation at His-245 regulates translation elongation by slowing ribosome traversal on tyrosine codons: slower elongation provides enough time for proper folding of synthesized proteins and prevents cellular aggregation of tyrosine-rich proteins. It is not required for incorporation of RPL3 into ribosomes.

The protein localises to the nucleus. Its subcellular location is the nucleolus. It is found in the cytoplasm. Functionally, component of the large ribosomal subunit. The ribosome is a large ribonucleoprotein complex responsible for the synthesis of proteins in the cell. This chain is Large ribosomal subunit protein uL3 (RPL3), found in Homo sapiens (Human).